Reading from the N-terminus, the 412-residue chain is Nuclear hormone receptor family member nhr-61 (412 aa).

Positions 1–19 are enriched in low complexity; it reads MIVDSISSSTASTSSSSPT. The disordered stretch occupies residues 1-23; that stretch reads MIVDSISSSTASTSSSSPTRGTP. Residues 27-102 constitute a DNA-binding region (nuclear receptor); that stretch reads SLQCAVCGDV…VGMNPRAVQG (76 aa). 2 NR C4-type zinc fingers span residues 30-50 and 66-90; these read CAVC…CNGC and CRHG…LTRC. The 264-residue stretch at 144 to 407 folds into the NR LBD domain; the sequence is KKEQIIDNLR…DWSQELRDHR (264 aa).

This sequence belongs to the nuclear hormone receptor family.

The protein resides in the nucleus. Orphan nuclear receptor. This chain is Nuclear hormone receptor family member nhr-61 (nhr-61), found in Caenorhabditis elegans.